Reading from the N-terminus, the 321-residue chain is Eukaryotic translation initiation factor 3 subunit I (321 aa).

WD repeat units follow at residues 8 to 47 (GHER…RLGT), 50 to 89 (GHGG…TLSK), 140 to 179 (VDNS…KLIS), 182 to 221 (EHSK…HLKT), and 279 to 318 (GHFG…DDIE).

The protein belongs to the eIF-3 subunit I family. In terms of assembly, component of the eukaryotic translation initiation factor 3 (eIF-3) complex.

Its subcellular location is the cytoplasm. Component of the eukaryotic translation initiation factor 3 (eIF-3) complex, which is involved in protein synthesis of a specialized repertoire of mRNAs and, together with other initiation factors, stimulates binding of mRNA and methionyl-tRNAi to the 40S ribosome. The eIF-3 complex specifically targets and initiates translation of a subset of mRNAs involved in cell proliferation. The chain is Eukaryotic translation initiation factor 3 subunit I from Nematostella vectensis (Starlet sea anemone).